The chain runs to 430 residues: Vitamin B6 salvage pathway transcriptional repressor PtsJ (430 aa).

One can recognise an HTH gntR-type domain in the interval 4–72 (GKTANEIFDS…GRNGTVIKGS (69 aa)). The H-T-H motif DNA-binding region spans 32 to 51 (VRELASELKVNRNTVAAAYK). A disordered region spans residues 70–95 (KGSPSPVALEGGDPHTPLHDLSGGNP). K282 carries the post-translational modification N6-(pyridoxal phosphate)lysine.

This sequence in the C-terminal section; belongs to the class-I pyridoxal-phosphate-dependent aminotransferase family. In terms of assembly, homodimer in both apo- and holo-forms.

In terms of biological role, acts as a transcriptional repressor of the pdxK gene, encoding a pyridoxal kinase involved in the vitamin B6 salvage pathway. Also represses transcription of its own gene. Binds to the ptsJ-pdxK intergenic region, but does not bind pdxY and pdxH promoters. Among all six B6 vitamers, only pyridoxal 5'-phosphate (PLP) clearly binds to the protein and acts as an effector molecule for PtsJ, inducing a protein conformational change that increases affinity for DNA. Thus, PLP stabilizes protein-DNA interactions, reinforcing repression. This Salmonella typhimurium (strain LT2 / SGSC1412 / ATCC 700720) protein is Vitamin B6 salvage pathway transcriptional repressor PtsJ.